A 905-amino-acid polypeptide reads, in one-letter code: Catenin alpha-2 (905 aa).

Residue threonine 632 is modified to Phosphothreonine. Serine 640, serine 651, and serine 853 each carry phosphoserine. Residues valine 869–threonine 879 are compositionally biased toward basic and acidic residues. The tract at residues valine 869–serine 891 is disordered. Basic residues predominate over residues arginine 880 to isoleucine 890. Serine 891 is subject to Phosphoserine.

Belongs to the vinculin/alpha-catenin family. Interacts with CDH1 and CDH2. Interacts with ZNF639; recruits CTNNA2 to the nucleus. Interacts with F-actin.

The protein localises to the cell membrane. It is found in the cytoplasm. It localises to the cytoskeleton. The protein resides in the cell junction. Its subcellular location is the adherens junction. The protein localises to the cell projection. It is found in the axon. It localises to the nucleus. Functionally, may function as a linker between cadherin adhesion receptors and the cytoskeleton to regulate cell-cell adhesion and differentiation in the nervous system. Required for proper regulation of cortical neuronal migration and neurite growth. It acts as a negative regulator of Arp2/3 complex activity and Arp2/3-mediated actin polymerization. It thereby suppresses excessive actin branching which would impair neurite growth and stability. Regulates morphological plasticity of synapses and cerebellar and hippocampal lamination during development. Functions in the control of startle modulation. The sequence is that of Catenin alpha-2 (CTNNA2) from Pongo abelii (Sumatran orangutan).